Consider the following 61-residue polypeptide: Large ribosomal subunit protein bL28 (61 aa).

The interval 1-26 (MAKDFVTGKHTRFGNTRSHALNHSRR) is disordered.

Belongs to the bacterial ribosomal protein bL28 family.

This is Large ribosomal subunit protein bL28 from Pediococcus pentosaceus (strain ATCC 25745 / CCUG 21536 / LMG 10740 / 183-1w).